Reading from the N-terminus, the 158-residue chain is Transcriptional repressor NrdR (158 aa).

The segment at 3-34 (CPYCGYPDSRVIDSRPTDDNTAIRRRRECLKC) is a zinc-finger region. In terms of domain architecture, ATP-cone spans 49–139 (ILVIKKDNRR…VYRQFKDINT (91 aa)).

The protein belongs to the NrdR family. Requires Zn(2+) as cofactor.

Its function is as follows. Negatively regulates transcription of bacterial ribonucleotide reductase nrd genes and operons by binding to NrdR-boxes. The protein is Transcriptional repressor NrdR of Caldanaerobacter subterraneus subsp. tengcongensis (strain DSM 15242 / JCM 11007 / NBRC 100824 / MB4) (Thermoanaerobacter tengcongensis).